The sequence spans 737 residues: Pentatricopeptide repeat-containing protein At3g49740 (737 aa).

PPR repeat units lie at residues 20-55 (TLLNLNRRLTGLTRSGENRNALKLFADVHRCTTLRP), 56-90 (DQYSVSLAITTARHLRDTIFGGQVHCYAIRSGLLC), 91-121 (HSHVSNTLLSLYERLGNLASLKKKFDEIDEP), 122-152 (DVYSWTTLLSASFKLGDIEYAFEVFDKMPER), 154-188 (DVAIWNAMITGCKESGYHETSVELFREMHKLGVRH), 189-222 (DKFGFATILSMCDYGSLDFGKQVHSLVIKAGFFI), 223-253 (ASSVVNALITMYFNCQVVVDACLVFEETDVA), 256-289 (DQVTFNVVIDGLAGFKRDESLLVFRKMLEASLRP), 290-321 (TDLTFVSVMGSCSCAAMGHQVHGLAIKTGYEK), 322-352 (YTLVSNATMTMYSSFEDFGAAHKVFESLEEK), 353-387 (DLVTWNTMISSYNQAKLGKSAMSVYKRMHIIGVKP), 388-418 (DEFTFGSLLATSLDLDVLEMVQACIIKFGLS), 420-454 (KIEISNALISAYSKNGQIEKADLLFERSLRKNLIS), 455-485 (WNAIISGFYHNGFPFEGLERFSCLLESEVRI), 488-522 (DAYTLSTLLSICVSTSSLMLGSQTHAYVLRHGQFK), 523-553 (ETLIGNALINMYSQCGTIQNSLEVFNQMSEK), 554-588 (DVVSWNSLISAYSRHGEGENAVNTYKTMQDEGKVI), 590-620 (DAATFSAVLSACSHAGLVEEGLEIFNSMVEF), and 626-656 (NVDHFSCLVDLLGRAGHLDEAESLVKISEKT). The tract at residues 663-737 (VWWALFSACA…KQRGCSWMRL (75 aa)) is type E motif; degenerate.

The protein belongs to the PPR family. PCMP-E subfamily.

This Arabidopsis thaliana (Mouse-ear cress) protein is Pentatricopeptide repeat-containing protein At3g49740 (PCMP-E84).